The chain runs to 901 residues: Core protein VP3 (901 aa).

This sequence belongs to the orbivirus VP3 family.

It is found in the virion. Functionally, the VP3 protein is one of the five proteins (with VP1, VP4, VP6 and VP7) which form the inner capsid of the virus. The protein is Core protein VP3 (Segment-3) of Bluetongue virus 1 (isolate South Africa) (BTV 1).